We begin with the raw amino-acid sequence, 92 residues long: UPF0250 protein Pmen_3793 (92 aa).

The protein belongs to the UPF0250 family.

This Ectopseudomonas mendocina (strain ymp) (Pseudomonas mendocina) protein is UPF0250 protein Pmen_3793.